Here is a 158-residue protein sequence, read N- to C-terminus: Transcription elongation factor GreA (158 aa).

Residues 1–26 (MNKVPLTEKGAQQLREELQELKTVVR) adopt a coiled-coil conformation.

This sequence belongs to the GreA/GreB family.

Its function is as follows. Necessary for efficient RNA polymerase transcription elongation past template-encoded arresting sites. The arresting sites in DNA have the property of trapping a certain fraction of elongating RNA polymerases that pass through, resulting in locked ternary complexes. Cleavage of the nascent transcript by cleavage factors such as GreA or GreB allows the resumption of elongation from the new 3'terminus. GreA releases sequences of 2 to 3 nucleotides. The polypeptide is Transcription elongation factor GreA (Nitrosococcus oceani (strain ATCC 19707 / BCRC 17464 / JCM 30415 / NCIMB 11848 / C-107)).